The following is a 359-amino-acid chain: tRNA N6-adenosine threonylcarbamoyltransferase (359 aa).

Residues His-115 and His-119 each contribute to the Fe cation site. Substrate is bound by residues 137 to 141 (LVSGG), Asp-170, Gly-183, and Asn-283. Asp-311 serves as a coordination point for Fe cation. A disordered region spans residues 328–359 (APDSLDIAPRSRWPLDEKSAPVFGTGRRGAKA).

This sequence belongs to the KAE1 / TsaD family. The cofactor is Fe(2+).

Its subcellular location is the cytoplasm. The catalysed reaction is L-threonylcarbamoyladenylate + adenosine(37) in tRNA = N(6)-L-threonylcarbamoyladenosine(37) in tRNA + AMP + H(+). Functionally, required for the formation of a threonylcarbamoyl group on adenosine at position 37 (t(6)A37) in tRNAs that read codons beginning with adenine. Is involved in the transfer of the threonylcarbamoyl moiety of threonylcarbamoyl-AMP (TC-AMP) to the N6 group of A37, together with TsaE and TsaB. TsaD likely plays a direct catalytic role in this reaction. The polypeptide is tRNA N6-adenosine threonylcarbamoyltransferase (Brucella ovis (strain ATCC 25840 / 63/290 / NCTC 10512)).